The primary structure comprises 156 residues: Small ribosomal subunit protein uS7 (156 aa).

This sequence belongs to the universal ribosomal protein uS7 family. Part of the 30S ribosomal subunit. Contacts proteins S9 and S11.

One of the primary rRNA binding proteins, it binds directly to 16S rRNA where it nucleates assembly of the head domain of the 30S subunit. Is located at the subunit interface close to the decoding center, probably blocks exit of the E-site tRNA. This Teredinibacter turnerae (strain ATCC 39867 / T7901) protein is Small ribosomal subunit protein uS7.